The chain runs to 636 residues: Molybdenum cofactor biosynthesis protein 1 (636 aa).

The tract at residues 1–383 is molybdenum cofactor biosynthesis protein A; sequence MAARPLSRML…QMKNRPMILI (383 aa). Residue Ser-64 is modified to Phosphoserine. The Radical SAM core domain maps to 64-277; sequence SFGRQHSYLR…LDTVRQQWPE (214 aa). Arg-73 contacts GTP. The [4Fe-4S] cluster site is built by Cys-80 and Cys-84. An S-adenosyl-L-methionine-binding site is contributed by Tyr-86. Position 87 (Cys-87) interacts with [4Fe-4S] cluster. GTP is bound at residue Arg-123. An S-adenosyl-L-methionine-binding site is contributed by Gly-127. Thr-154 contacts GTP. Residue Ser-178 participates in S-adenosyl-L-methionine binding. Position 198 is an N6-acetyllysine (Lys-198). Lys-215 serves as a coordination point for GTP. Met-249 contacts S-adenosyl-L-methionine. 2 residues coordinate [4Fe-4S] cluster: Cys-312 and Cys-315. Residue 317 to 319 coordinates GTP; it reads RLR. Cys-329 serves as a coordination point for [4Fe-4S] cluster. Positions 414-636 are molybdenum cofactor biosynthesis protein C; it reads MSFSSQVATL…GGQRGDFHRA (223 aa). Residues 456 to 480 form a disordered region; the sequence is DANSKCLSPGSWASAAPSGPQLTSE. The span at 463 to 475 shows a compositional bias: low complexity; sequence SPGSWASAAPSGP. Lys-528 is subject to N6-acetyllysine. Residue Asp-606 is the For molybdenum cofactor biosynthesis protein C activity of the active site.

In the C-terminal section; belongs to the MoaC family. This sequence in the N-terminal section; belongs to the radical SAM superfamily. MoaA family. Isoform MOCS1A and isoform MOCS1B probably form a heterooligomer. [4Fe-4S] cluster is required as a cofactor. In terms of tissue distribution, isoform MOCS1A and isoform 2 are widely expressed.

The catalysed reaction is GTP + AH2 + S-adenosyl-L-methionine = (8S)-3',8-cyclo-7,8-dihydroguanosine 5'-triphosphate + 5'-deoxyadenosine + L-methionine + A + H(+). It carries out the reaction (8S)-3',8-cyclo-7,8-dihydroguanosine 5'-triphosphate = cyclic pyranopterin phosphate + diphosphate. The protein operates within cofactor biosynthesis; molybdopterin biosynthesis. Functionally, isoform MOCS1A and isoform MOCS1B probably form a complex that catalyzes the conversion of 5'-GTP to cyclic pyranopterin monophosphate (cPMP). MOCS1A catalyzes the cyclization of GTP to (8S)-3',8-cyclo-7,8-dihydroguanosine 5'-triphosphate and MOCS1B catalyzes the subsequent conversion of (8S)-3',8-cyclo-7,8-dihydroguanosine 5'-triphosphate to cPMP. The polypeptide is Molybdenum cofactor biosynthesis protein 1 (MOCS1) (Homo sapiens (Human)).